Here is a 541-residue protein sequence, read N- to C-terminus: Chaperonin GroEL 2 (541 aa).

ATP is bound by residues 29–32, 86–90, Gly413, 476–478, and Asp492; these read TLGP, DGTTT, and NAA.

The protein belongs to the chaperonin (HSP60) family. In terms of assembly, forms a cylinder of 14 subunits composed of two heptameric rings stacked back-to-back. Interacts with the co-chaperonin GroES.

The protein resides in the secreted. The protein localises to the capsule. It localises to the cell surface. Its subcellular location is the cell wall. The enzyme catalyses ATP + H2O + a folded polypeptide = ADP + phosphate + an unfolded polypeptide.. In terms of biological role, together with its co-chaperonin GroES, plays an essential role in assisting protein folding. The GroEL-GroES system forms a nano-cage that allows encapsulation of the non-native substrate proteins and provides a physical environment optimized to promote and accelerate protein folding. This is Chaperonin GroEL 2 from Mycobacterium avium (strain 104).